The following is a 438-amino-acid chain: Serine--tRNA ligase (438 aa).

Position 235–237 (threonine 235–glutamate 237) interacts with L-serine. Residues arginine 266–glutamate 268 and valine 282 contribute to the ATP site. Position 289 (glutamate 289) interacts with L-serine. Position 355–358 (glutamate 355–serine 358) interacts with ATP. Threonine 393 is an L-serine binding site.

Belongs to the class-II aminoacyl-tRNA synthetase family. Type-1 seryl-tRNA synthetase subfamily. Homodimer. The tRNA molecule binds across the dimer.

It carries out the reaction tRNA(Ser) + L-serine + ATP = L-seryl-tRNA(Ser) + AMP + diphosphate + H(+). It catalyses the reaction tRNA(Sec) + L-serine + ATP = L-seryl-tRNA(Sec) + AMP + diphosphate + H(+). It functions in the pathway aminoacyl-tRNA biosynthesis; selenocysteinyl-tRNA(Sec) biosynthesis; L-seryl-tRNA(Sec) from L-serine and tRNA(Sec): step 1/1. Its function is as follows. Catalyzes the attachment of serine to tRNA(Ser). Is also able to aminoacylate tRNA(Sec) with serine, to form the misacylated tRNA L-seryl-tRNA(Sec), which will be further converted into selenocysteinyl-tRNA(Sec). The chain is Serine--tRNA ligase from Helianthus annuus (Common sunflower).